Reading from the N-terminus, the 196-residue chain is uncharacterized protein (196 aa).

In terms of domain architecture, Bro-N spans 58–163 (HKFFDAIKDS…IILPNNYHKN (106 aa)).

This is an uncharacterized protein from Acanthamoeba polyphaga mimivirus (APMV).